A 180-amino-acid polypeptide reads, in one-letter code: Adenosine 5'-phosphosulfate reductase (180 aa).

The [4Fe-4S] cluster site is built by C57, C58, C140, and C143. C168 (nucleophile; cysteine thiosulfonate intermediate) is an active-site residue.

Belongs to the PAPS reductase family. CysH subfamily. It depends on [4Fe-4S] cluster as a cofactor.

It localises to the cytoplasm. The catalysed reaction is [thioredoxin]-disulfide + sulfite + AMP + 2 H(+) = adenosine 5'-phosphosulfate + [thioredoxin]-dithiol. It functions in the pathway sulfur metabolism; hydrogen sulfide biosynthesis; sulfite from sulfate. Its function is as follows. Catalyzes the formation of sulfite from adenosine 5'-phosphosulfate (APS) using thioredoxin as an electron donor. The protein is Adenosine 5'-phosphosulfate reductase of Rhizobium tropici.